The sequence spans 335 residues: Phospho-N-acetylmuramoyl-pentapeptide-transferase (335 aa).

The next 10 helical transmembrane spans lie at 3–23, 53–73, 78–98, 118–138, 143–163, 175–195, 200–220, 226–246, 251–271, and 314–334; these read LTLIAGLISLLLTALIMPHFI, GGTVFLLVASFVSFLFAILFF, SMGLITGILAIVLIYGFIGFL, LSLQIVGGLIFYFLHVVPSGI, VFGFPVHLGLLYIFFVLFWVV, IDGLASISVVISLLTYSVIAI, YDVLLLCGIMIGALLGFFIFN, VFMGDVGSLALGAMLAAISIA, WTLLVIGLVYVFETSSVMLQV, and VDAFLWSVGAVSSLIVLAILY.

This sequence belongs to the glycosyltransferase 4 family. MraY subfamily. The cofactor is Mg(2+).

The protein resides in the cell membrane. The enzyme catalyses UDP-N-acetyl-alpha-D-muramoyl-L-alanyl-gamma-D-glutamyl-L-lysyl-D-alanyl-D-alanine + di-trans,octa-cis-undecaprenyl phosphate = Mur2Ac(oyl-L-Ala-gamma-D-Glu-L-Lys-D-Ala-D-Ala)-di-trans,octa-cis-undecaprenyl diphosphate + UMP. The protein operates within cell wall biogenesis; peptidoglycan biosynthesis. Its function is as follows. Catalyzes the initial step of the lipid cycle reactions in the biosynthesis of the cell wall peptidoglycan: transfers peptidoglycan precursor phospho-MurNAc-pentapeptide from UDP-MurNAc-pentapeptide onto the lipid carrier undecaprenyl phosphate, yielding undecaprenyl-pyrophosphoryl-MurNAc-pentapeptide, known as lipid I. The chain is Phospho-N-acetylmuramoyl-pentapeptide-transferase from Streptococcus uberis (strain ATCC BAA-854 / 0140J).